Here is a 223-residue protein sequence, read N- to C-terminus: Neurotrophic factor BDNF precursor form (223 aa).

Residues 1 to 5 form the signal peptide; it reads SCMKA. A propeptide spanning residues 6-114 is cleaved from the precursor; the sequence is APMKEVSIRG…AANMSMRVRR (109 aa). Residue Asn107 is glycosylated (N-linked (GlcNAc...) asparagine). 2 cysteine pairs are disulfide-bonded: Cys127–Cys194 and Cys172–Cys223.

This sequence belongs to the NGF-beta family.

The protein resides in the secreted. Promotes the survival of neuronal populations that are all located either in the central nervous system or directly connected to it. In Charina bottae (Northern rubber boa), this protein is Neurotrophic factor BDNF precursor form (BDNF).